The primary structure comprises 258 residues: MTLKARVIPCLDVKDGRVVKGVNFVDLIDAGDPVEAAKAYDAAGADELCFLDITASSDNRETIFDVVARTAEQCFMPLTVGGGVRQVSDIRKLLLAGADKVSINTAAVKNPEFVAEAADKFGNQCIVVAIDAKKVSAAGETDRWEIFTHGGRQPTGIDAIDFARKVVDLGAGEILLTSMDRDGTKSGYDIALTRAIADAVRAPVIASGGVGTLDHMVEGIRDGHATAVLAASIFHFGTYSIGEAKRYMAERGIAMRLD.

Residues D12 and D131 contribute to the active site.

The protein belongs to the HisA/HisF family. Heterodimer of HisH and HisF.

The protein localises to the cytoplasm. It carries out the reaction 5-[(5-phospho-1-deoxy-D-ribulos-1-ylimino)methylamino]-1-(5-phospho-beta-D-ribosyl)imidazole-4-carboxamide + L-glutamine = D-erythro-1-(imidazol-4-yl)glycerol 3-phosphate + 5-amino-1-(5-phospho-beta-D-ribosyl)imidazole-4-carboxamide + L-glutamate + H(+). Its pathway is amino-acid biosynthesis; L-histidine biosynthesis; L-histidine from 5-phospho-alpha-D-ribose 1-diphosphate: step 5/9. Functionally, IGPS catalyzes the conversion of PRFAR and glutamine to IGP, AICAR and glutamate. The HisF subunit catalyzes the cyclization activity that produces IGP and AICAR from PRFAR using the ammonia provided by the HisH subunit. This Sinorhizobium fredii (strain NBRC 101917 / NGR234) protein is Imidazole glycerol phosphate synthase subunit HisF.